A 423-amino-acid polypeptide reads, in one-letter code: Zinc transporter ZIP13 (423 aa).

The Lumenal segment spans residues 1-15; that stretch reads MPGCPCPGIGMAGQR. Residues 16–36 form a helical membrane-spanning segment; it reads LLFLAALALELLGGAGGSQQA. Topologically, residues 37–68 are cytoplasmic; it reads LRSRGVAAACRLDSKESESWGALLSGERLETW. Residues 69–89 form a helical membrane-spanning segment; the sequence is ICSLLGSLMVGLSGVFPLLVI. Over 90-108 the chain is Lumenal; sequence PLEMGTTLRSEAGARRLKQ. A helical membrane pass occupies residues 109–129; that stretch reads LLSFALGGLLGNVFLHLLPEA. Topologically, residues 130–149 are cytoplasmic; sequence WAYTNSASSGGERQSLQQQQ. A helical membrane pass occupies residues 150–170; the sequence is QLGLWVIAGFLTFLVLEKLFF. At 171 to 235 the chain is on the lumenal side; the sequence is DSKGKEETSQ…TIDNFTHGLA (65 aa). A helical transmembrane segment spans residues 236–256; the sequence is VAASFLVSKKIGLLTTMAILL. The XEXPHE-motif motif lies at 257–262; the sequence is HEIPHE. Residues 257–278 lie on the Cytoplasmic side of the membrane; sequence HEIPHEVGDFAILLRAGFDRWS. A helical membrane pass occupies residues 279–299; it reads AAKLQLSTALGGLLGACFAIC. Residues 300–368 lie on the Lumenal side of the membrane; that stretch reads AQSPKGVGTG…RAPPPATEET (69 aa). The chain crosses the membrane as a helical span at residues 369–389; the sequence is VAWILPFTSGGFLYIALVNVL. Topologically, residues 390 to 401 are cytoplasmic; the sequence is PDLLEEDDPWRS. A helical transmembrane segment spans residues 402–422; the sequence is LQQVLLLCAGIVVMVLFSVFV. A topological domain (lumenal) is located at residue Glu423.

Belongs to the ZIP transporter (TC 2.A.5) family. In terms of assembly, homodimer.

It is found in the golgi apparatus membrane. Its subcellular location is the cytoplasmic vesicle membrane. The protein localises to the endoplasmic reticulum membrane. It carries out the reaction Zn(2+)(in) = Zn(2+)(out). Functionally, functions as a zinc transporter transporting Zn(2+) from the Golgi apparatus to the cytosol and thus influences the zinc level at least in areas of the cytosol. May regulate beige adipocyte differentiation. In Bos taurus (Bovine), this protein is Zinc transporter ZIP13.